We begin with the raw amino-acid sequence, 348 residues long: Holliday junction branch migration complex subunit RuvB (348 aa).

The tract at residues 4–186 is large ATPase domain (RuvB-L); sequence TDRIISANTV…FGIIQRLEFY (183 aa). ATP is bound by residues isoleucine 25, arginine 26, glycine 67, lysine 70, threonine 71, threonine 72, 133-135, arginine 176, tyrosine 186, and arginine 223; that span reads EDY. A Mg(2+)-binding site is contributed by threonine 71. A small ATPAse domain (RuvB-S) region spans residues 187-257; sequence SVDDLAKIVY…IADKALTMLK (71 aa). The interval 260 to 348 is head domain (RuvB-H); the sequence is PVGFDHMDHK…SSDQQQNLSL (89 aa). The DNA site is built by arginine 315 and arginine 320.

Belongs to the RuvB family. In terms of assembly, homohexamer. Forms an RuvA(8)-RuvB(12)-Holliday junction (HJ) complex. HJ DNA is sandwiched between 2 RuvA tetramers; dsDNA enters through RuvA and exits via RuvB. An RuvB hexamer assembles on each DNA strand where it exits the tetramer. Each RuvB hexamer is contacted by two RuvA subunits (via domain III) on 2 adjacent RuvB subunits; this complex drives branch migration. In the full resolvosome a probable DNA-RuvA(4)-RuvB(12)-RuvC(2) complex forms which resolves the HJ.

It localises to the cytoplasm. The enzyme catalyses ATP + H2O = ADP + phosphate + H(+). Functionally, the RuvA-RuvB-RuvC complex processes Holliday junction (HJ) DNA during genetic recombination and DNA repair, while the RuvA-RuvB complex plays an important role in the rescue of blocked DNA replication forks via replication fork reversal (RFR). RuvA specifically binds to HJ cruciform DNA, conferring on it an open structure. The RuvB hexamer acts as an ATP-dependent pump, pulling dsDNA into and through the RuvAB complex. RuvB forms 2 homohexamers on either side of HJ DNA bound by 1 or 2 RuvA tetramers; 4 subunits per hexamer contact DNA at a time. Coordinated motions by a converter formed by DNA-disengaged RuvB subunits stimulates ATP hydrolysis and nucleotide exchange. Immobilization of the converter enables RuvB to convert the ATP-contained energy into a lever motion, pulling 2 nucleotides of DNA out of the RuvA tetramer per ATP hydrolyzed, thus driving DNA branch migration. The RuvB motors rotate together with the DNA substrate, which together with the progressing nucleotide cycle form the mechanistic basis for DNA recombination by continuous HJ branch migration. Branch migration allows RuvC to scan DNA until it finds its consensus sequence, where it cleaves and resolves cruciform DNA. This is Holliday junction branch migration complex subunit RuvB from Francisella philomiragia subsp. philomiragia (strain ATCC 25017 / CCUG 19701 / FSC 153 / O#319-036).